We begin with the raw amino-acid sequence, 503 residues long: Alpha-1-syntrophin (503 aa).

PH domains lie at 6–263 (RAPR…AQIG) and 287–399 (DIKQ…DGCH). Residues 40–68 (LTVSPADGEPGPEPEPAQLNGAAEPGAAP) are disordered. One can recognise a PDZ domain in the interval 81-164 (RVTVRKADAG…EVVLEVKYMK (84 aa)). Phosphoserine occurs at positions 95, 178, 183, 187, and 194. Residues 177 to 203 (TSVGWDSPPASPLQRQPSSPGPQPRNL) form a disordered region. The SU domain occupies 447–503 (PFEKLQMSSDDGTSLLFLDFGGAEGEIQLDLHSCPKTMVFIIHSFLSAKVTRLGLLA). Positions 481 to 503 (PKTMVFIIHSFLSAKVTRLGLLA) are calmodulin-binding.

It belongs to the syntrophin family. Monomer and homodimer. Interacts with MAPK12, TGFA, GA and F-actin. Interacts with the other members of the syntrophin family: SNTB1 and SNTB2; with dystrophin protein DMD and related proteins DTNA and UTRN; SGCG and SGCA of the dystrophin glycoprotein complex; NOS1; GRB2; calmodulin and the sodium channel proteins SCN4A and SCN5A. Interacts with MYOC; regulates muscle hypertrophy. Interacts with DTNB. In terms of processing, phosphorylated by CaM-kinase II. Phosphorylation may inhibit the interaction with DMD. As to expression, high expression in skeletal muscle. Expressed at intermediate level in heart, kidney and brain, and at low level in intestine, liver, lung and testis.

The protein localises to the cell membrane. It localises to the sarcolemma. Its subcellular location is the cell junction. The protein resides in the cytoplasm. It is found in the cytoskeleton. Adapter protein that binds to and probably organizes the subcellular localization of a variety of membrane proteins. May link various receptors to the actin cytoskeleton and the extracellular matrix via the dystrophin glycoprotein complex. Plays an important role in synapse formation and in the organization of UTRN and acetylcholine receptors at the neuromuscular synapse. Binds to phosphatidylinositol 4,5-bisphosphate. This Mus musculus (Mouse) protein is Alpha-1-syntrophin (Snta1).